The chain runs to 379 residues: Putative cyclic ADP-D-ribose synthase TIR2 (379 aa).

The TIR domain occupies 254–379 (KVYDVFISHS…TISWTTGLVK (126 aa)). Glu335 is a catalytic residue.

In terms of assembly, homodimer.

Its subcellular location is the cytoplasm. Activated upon phage infection. In terms of biological role, one of 2 TIR-like protein components of the Thoeris antiviral defense system, composed of ThsA, TIR1 (thsB1) and TIR2 (thsB2). Phage infection activates this protein; by 70 minutes post-infection with phage SPO1, TIR2 generates a signal molecule that in turn activates the NAD(+) hydrolase activity of ThsA (tested with B.cereus). The signal is similar to cyclic ADP-D-ribose, but how it differs is unknown. Expression of Thoeris in B.subtilis (strain BEST7003) confers resistance to phages phi29, phi3T, SPBeta, SBSphi11, SBSphi13, SBSphiJ, SPO1 and SPR but not SBSphiC. The TIR paralogs confer resistance to different phages; this subunit confers resistance to phi3T, SPBeta, SBSphi13, SBSphiJ, SPO1 and SPR but not phi29, SBSphi11 or SBSphiC. There is overlap in the phage range for this system, both TIR1 and TIR2 are activated by SBSphi13, SBSphiJ, SPO1 and SPR. Probably hydrolyzes NAD(+) to make a cyclic ADP-D-ribose (cADPR) signaling molecule; might make 3'cADPR. This chain is Putative cyclic ADP-D-ribose synthase TIR2, found in Cytobacillus dafuensis (Bacillus dafuensis).